Reading from the N-terminus, the 356-residue chain is ATP-dependent 6-phosphofructokinase (356 aa).

ATP contacts are provided by residues G15, 78–79, and 115–118; these read KG and GEGT. E116 is a binding site for Mg(2+). Substrate contacts are provided by residues 138–140, R175, 182–184, E235, R272, and 278–281; these read TID, MGR, and HLQR. The Proton acceptor role is filled by D140.

The protein belongs to the phosphofructokinase type A (PFKA) family. Mixed-substrate PFK group III subfamily. In terms of assembly, homodimer or homotetramer. It depends on Mg(2+) as a cofactor.

It localises to the cytoplasm. The catalysed reaction is beta-D-fructose 6-phosphate + ATP = beta-D-fructose 1,6-bisphosphate + ADP + H(+). The protein operates within carbohydrate degradation; glycolysis; D-glyceraldehyde 3-phosphate and glycerone phosphate from D-glucose: step 3/4. Functionally, catalyzes the phosphorylation of D-fructose 6-phosphate to fructose 1,6-bisphosphate by ATP, the first committing step of glycolysis. The polypeptide is ATP-dependent 6-phosphofructokinase (Chloroflexus aurantiacus (strain ATCC 29366 / DSM 635 / J-10-fl)).